The chain runs to 1036 residues: Lethal(2) giant larvae protein homolog 1 (1036 aa).

10 WD repeats span residues 38-71 (SALAFDPELRIMAIGTRSGAVKIYGAPGVEFTGL), 78-119 (VTQM…GLSF), 139-175 (VTVVLLAAGDTVVLGTESGSIFFLDVATLALLEGQTL), 199-233 (SLQGHLQDPSKILIGYSRGLLVIWSQATQSVEHVF), 239-271 (LESLCWGRGGSNIISSHSDGSYAIWSTDTGSPP), 289-331 (AINK…ETLV), 339-373 (VIDFFTVHSTQPEDECDNPQALAVLLEEELVVLDL), 395-473 (TCSA…YKLS), 517-592 (QKVA…RMLI), and 601-662 (TAVT…LRQS). At serine 662 the chain carries Phosphoserine. The span at 667–677 (RKSRVSGKKRT) shows a compositional bias: basic residues. Residues 667–688 (RKSRVSGKKRTPAASSKLQEAN) are disordered. Over residues 679–688 (AASSKLQEAN) the composition is skewed to polar residues. WD repeat units lie at residues 722–782 (VRCL…KEVQ), 791–843 (AIAV…VSAK), 848–901 (LTAH…VHYS), and 915–938 (VFTRHGQGFYLISPSEFERFSLSA). Residue threonine 957 is modified to Phosphothreonine. Phosphoserine is present on residues serine 964, serine 982, and serine 989. Residues 980 to 1002 (PESCEGSPSSAHSKRADTMEPPE) form a disordered region.

It belongs to the WD repeat L(2)GL family. Associated with nonmuscle myosin II heavy chain. Interacts with PRKCI/aPKC, PARD6B/Par-6 and PARD6A. Interacts with STX4A. Interacts with RAB10 (GDP-bound form); the interaction is direct and promotes RAB10 association with membranes and activation through competition with the Rab inhibitor GDI1. Interacts with DCAF1. Phosphorylated by PRKCI. Widely expressed. Expressed in brain, ovary, testis, with moderate expression in lever, uterus, lung and kidney.

The protein resides in the early endosome membrane. The protein localises to the golgi apparatus. It localises to the trans-Golgi network membrane. It is found in the cell projection. Its subcellular location is the axon. The protein resides in the golgi apparatus membrane. The protein localises to the cytoplasm. It localises to the cytoskeleton. Functionally, cortical cytoskeleton protein found in a complex involved in maintaining cell polarity and epithelial integrity. Involved in the regulation of mitotic spindle orientation, proliferation, differentiation and tissue organization of neuroepithelial cells. Involved in axonogenesis through RAB10 activation thereby regulating vesicular membrane trafficking toward the axonal plasma membrane. In Bos taurus (Bovine), this protein is Lethal(2) giant larvae protein homolog 1 (LLGL1).